A 457-amino-acid polypeptide reads, in one-letter code: NADP-specific glutamate dehydrogenase (457 aa).

Lysine 113 is an active-site residue.

Belongs to the Glu/Leu/Phe/Val dehydrogenases family. Homohexamer.

The catalysed reaction is L-glutamate + NADP(+) + H2O = 2-oxoglutarate + NH4(+) + NADPH + H(+). This Tuber borchii (White truffle) protein is NADP-specific glutamate dehydrogenase (GDH).